An 881-amino-acid polypeptide reads, in one-letter code: Leucine--tRNA ligase (881 aa).

The short motif at 48 to 58 (PYPSGKLHMGH) is the 'HIGH' region element. A 'KMSKS' region motif is present at residues 638-642 (KMSKS). Lys-641 is a binding site for ATP.

It belongs to the class-I aminoacyl-tRNA synthetase family.

It is found in the cytoplasm. It carries out the reaction tRNA(Leu) + L-leucine + ATP = L-leucyl-tRNA(Leu) + AMP + diphosphate. The protein is Leucine--tRNA ligase of Janthinobacterium sp. (strain Marseille) (Minibacterium massiliensis).